A 362-amino-acid polypeptide reads, in one-letter code: MEWRSLPVELQEEILSRVPAKYLARLRSTSKQWNALSKTGSFAKKHSANATKEPLIIMLKDSRVYLASVNLHGVHNNVAQSFELGSRLYLKDPHISNVFHCDGLLLLCSIKENTLEVWNPCSGEAKLIKPRHSYYKESDFYALGYDNKSSCKKYKVLRVISQVHVQGDFKIEYEIYDFTNDSWRVHGATTELSIRQKHPVSVKGSTYWVVRNRYFPYKYFLSFDFSTERFQSLSLPQPFPYLVTDLSVVREEQLCLFGYYNWSTTSEDLNVWVTTSLGSVVSWSKFLTIQIIKPRVDMFDYGMSFLVDEQNKSLVCWISQKVLHIVGEIYHIQDLDDHGRDSALRSSCSVLMNYVPSLAQIQ.

Residues 1–46 form the F-box domain; it reads MEWRSLPVELQEEILSRVPAKYLARLRSTSKQWNALSKTGSFAKKH.

This Arabidopsis thaliana (Mouse-ear cress) protein is Putative F-box protein At3g23260.